We begin with the raw amino-acid sequence, 326 residues long: Ornithine carbamoyltransferase (326 aa).

Carbamoyl phosphate is bound by residues 54–57, Gln-81, Arg-105, and 132–135; these read STRT and HPTQ. L-ornithine contacts are provided by residues Asn-164, Asp-225, and 229-230; that span reads SM. Carbamoyl phosphate is bound by residues 266-267 and Arg-311; that span reads CL.

Belongs to the aspartate/ornithine carbamoyltransferase superfamily. OTCase family.

The protein localises to the cytoplasm. The enzyme catalyses carbamoyl phosphate + L-ornithine = L-citrulline + phosphate + H(+). The protein operates within amino-acid biosynthesis; L-arginine biosynthesis; L-arginine from L-ornithine and carbamoyl phosphate: step 1/3. In terms of biological role, reversibly catalyzes the transfer of the carbamoyl group from carbamoyl phosphate (CP) to the N(epsilon) atom of ornithine (ORN) to produce L-citrulline. The chain is Ornithine carbamoyltransferase (argF) from Streptococcus mutans serotype c (strain ATCC 700610 / UA159).